A 406-amino-acid chain; its full sequence is Tryptophan synthase beta chain (406 aa).

Residue lysine 99 is modified to N6-(pyridoxal phosphate)lysine.

This sequence belongs to the TrpB family. Tetramer of two alpha and two beta chains. The cofactor is pyridoxal 5'-phosphate.

The enzyme catalyses (1S,2R)-1-C-(indol-3-yl)glycerol 3-phosphate + L-serine = D-glyceraldehyde 3-phosphate + L-tryptophan + H2O. It functions in the pathway amino-acid biosynthesis; L-tryptophan biosynthesis; L-tryptophan from chorismate: step 5/5. In terms of biological role, the beta subunit is responsible for the synthesis of L-tryptophan from indole and L-serine. This is Tryptophan synthase beta chain from Chelativorans sp. (strain BNC1).